The chain runs to 312 residues: Holliday junction branch migration complex subunit RuvB (312 aa).

A large ATPase domain (RuvB-L) region spans residues 1-168; that stretch reads MKTNYEFRPQ…FGHIFHLNEY (168 aa). ATP-binding positions include arginine 8, glycine 49, lysine 52, threonine 53, threonine 54, 115–117, arginine 158, tyrosine 168, and arginine 206; that span reads EDF. Residue threonine 53 participates in Mg(2+) binding. The segment at 169 to 234 is small ATPAse domain (RuvB-S); that stretch reads EPSEISAIIL…DIKNIFKKIQ (66 aa). The interval 237 to 312 is head domain (RuvB-H); sequence EFGLDEQDIN…DFLKNNQLIK (76 aa). DNA-binding residues include lysine 290 and arginine 295.

It belongs to the RuvB family. As to quaternary structure, homohexamer. Forms an RuvA(8)-RuvB(12)-Holliday junction (HJ) complex. HJ DNA is sandwiched between 2 RuvA tetramers; dsDNA enters through RuvA and exits via RuvB. An RuvB hexamer assembles on each DNA strand where it exits the tetramer. Each RuvB hexamer is contacted by two RuvA subunits (via domain III) on 2 adjacent RuvB subunits; this complex drives branch migration. In the full resolvosome a probable DNA-RuvA(4)-RuvB(12)-RuvC(2) complex forms which resolves the HJ.

The protein localises to the cytoplasm. The catalysed reaction is ATP + H2O = ADP + phosphate + H(+). Functionally, the RuvA-RuvB-RuvC complex processes Holliday junction (HJ) DNA during genetic recombination and DNA repair, while the RuvA-RuvB complex plays an important role in the rescue of blocked DNA replication forks via replication fork reversal (RFR). RuvA specifically binds to HJ cruciform DNA, conferring on it an open structure. The RuvB hexamer acts as an ATP-dependent pump, pulling dsDNA into and through the RuvAB complex. RuvB forms 2 homohexamers on either side of HJ DNA bound by 1 or 2 RuvA tetramers; 4 subunits per hexamer contact DNA at a time. Coordinated motions by a converter formed by DNA-disengaged RuvB subunits stimulates ATP hydrolysis and nucleotide exchange. Immobilization of the converter enables RuvB to convert the ATP-contained energy into a lever motion, pulling 2 nucleotides of DNA out of the RuvA tetramer per ATP hydrolyzed, thus driving DNA branch migration. The RuvB motors rotate together with the DNA substrate, which together with the progressing nucleotide cycle form the mechanistic basis for DNA recombination by continuous HJ branch migration. Branch migration allows RuvC to scan DNA until it finds its consensus sequence, where it cleaves and resolves cruciform DNA. The sequence is that of Holliday junction branch migration complex subunit RuvB from Ureaplasma parvum serovar 3 (strain ATCC 27815 / 27 / NCTC 11736).